We begin with the raw amino-acid sequence, 416 residues long: Protein MID1-COMPLEMENTING ACTIVITY 2 (416 aa).

Positions 191–219 (CEALKTEEEKLQLELQRSRARYDADQCEV) form a coiled coil. Residues 338–354 (LIVYSLILSCCCYTCCI) traverse the membrane as a helical segment.

As to expression, expressed in roots, leaves, stems, flowers and siliques. In the root, high levels of expression in vascular tissues, in the stele and endodermis, but no expression in the cortex, epidermis, root cap, promeristem and adjacent elongation zone of the primary root. Not expressed in root hairs. Detected in shoot apical meristem, leaf mesophyll cells and vascular tissues, upper half of inflorescence, but not in petioles of rosette leaves.

It localises to the cell membrane. With respect to regulation, inhibited by GdCl(3), but not by verapamil. In terms of biological role, calcium-permeable stretch-activated channel component. Probably involved in mechanosensing and in mechano-stimulated calcium uptake mechanism. The protein is Protein MID1-COMPLEMENTING ACTIVITY 2 (MCA2) of Arabidopsis thaliana (Mouse-ear cress).